Reading from the N-terminus, the 309-residue chain is DSC E3 ubiquitin ligase complex subunit C (309 aa).

A glycan (N-linked (GlcNAc...) asparagine) is linked at Asn61. Disordered stretches follow at residues 88 to 110 and 148 to 177; these read LPPS…GKGK and EQAD…FDRL. The next 2 helical transmembrane spans lie at 257 to 277 and 289 to 309; these read DDML…AMWL and GLAV…RIMN.

This sequence belongs to the dsc3 family. In terms of assembly, component of the DSC E3 ubiquitin ligase complex composed of dscA, dscB, dscC and dscD.

It localises to the endoplasmic reticulum membrane. Its pathway is protein modification; protein ubiquitination. In terms of biological role, component of the DSC E3 ubiquitin ligase complex which is required for the srbA transcriptional activator proteolytic cleavage to release the soluble transcription factor from the membrane in low oxygen or sterol conditions. Required for growth during hypoxia and triazole drug susceptibility, as well as for virulence in a murine model of invasive pulmonary aspergillosis (IPA). The sequence is that of DSC E3 ubiquitin ligase complex subunit C from Aspergillus fumigatus (strain CBS 144.89 / FGSC A1163 / CEA10) (Neosartorya fumigata).